A 75-amino-acid chain; its full sequence is Small ribosomal subunit protein bS18 (75 aa).

This sequence belongs to the bacterial ribosomal protein bS18 family. As to quaternary structure, part of the 30S ribosomal subunit. Forms a tight heterodimer with protein bS6.

Functionally, binds as a heterodimer with protein bS6 to the central domain of the 16S rRNA, where it helps stabilize the platform of the 30S subunit. The polypeptide is Small ribosomal subunit protein bS18 (rbsR) (Rhodobacter capsulatus (strain ATCC BAA-309 / NBRC 16581 / SB1003)).